Here is a 1544-residue protein sequence, read N- to C-terminus: Rho guanine nucleotide exchange factor 12 (1544 aa).

Residues 1-62 (MSGTQSTITD…KTKSSSEESR (62 aa)) are disordered. Residue Ser-2 is modified to N-acetylserine. Over residues 28–45 (SPTDKKQKVERIASHDFD) the composition is skewed to basic and acidic residues. Ser-41 is modified (phosphoserine). A PDZ domain is found at 72-151 (CVIIQKDDNG…LTVQGRPPGS (80 aa)). Residues 194-262 (MGEENNVVHN…LSKATGSAQD (69 aa)) adopt a coiled-coil conformation. Positions 247–346 (PQLQEQLSKA…SLVGSPSTRI (100 aa)) are disordered. Composition is skewed to polar residues over residues 249–260 (LQEQLSKATGSA) and 293–309 (DCSS…NADS). A Phosphoserine modification is found at Ser-309. Basic and acidic residues predominate over residues 313-329 (GPKERIYLEENPEKSET). Polar residues predominate over residues 330-344 (IQDTDTQSLVGSPST). Ser-341 carries the post-translational modification Phosphoserine. In terms of domain architecture, RGSL spans 367–558 (GQCSCFQSIE…LMYMKHLGVK (192 aa)). Positions 570–706 (GRIGFLPKIK…GDTLDGTPRT (137 aa)) are disordered. The span at 582 to 592 (MKKDKEGEEKG) shows a compositional bias: basic and acidic residues. Residues 631–640 (STPSSVSPEP) are compositionally biased toward polar residues. Phosphoserine is present on Ser-637. A compositionally biased stretch (low complexity) spans 663–676 (ANSMSSVASGASFS). Position 736 is a phosphothreonine (Thr-736). A DH domain is found at 787–977 (KRQEVINELF…RQILNYVNQA (191 aa)). Positions 1019 to 1132 (KMIHEGPLVW…WQDLICRMAA (114 aa)) constitute a PH domain. The span at 1138–1149 (STKPIPLPQSTP) shows a compositional bias: polar residues. The disordered stretch occupies residues 1138-1179 (STKPIPLPQSTPGEGDNDEEDPSKLKEEQHGISVTGLQSPDR). 5 positions are modified to phosphoserine: Ser-1288, Ser-1327, Ser-1377, Ser-1457, and Ser-1541.

As to quaternary structure, interacts with GNA12 and GNA13, probably through the RGS-like domain. Interacts with RHOA, PLXNB1 and PLXNB2. Interacts through its PDZ domain with IGF1R beta subunit. Interacts with GCSAM. Found in a complex with ARHGEF11 and ARHGEF12; binding to ARHGEF11 and ARHGEF12 enhances CDC42 GEF activity of PLEKHG4B, and PLEKHG4B, in turn, inhibits ARHGEF11- and ARHGEF12-mediated RHOA activation. As to expression, ubiquitously expressed. Isoform 2 is found in jejunum and testis.

It is found in the cytoplasm. The protein localises to the membrane. Functionally, may play a role in the regulation of RhoA GTPase by guanine nucleotide-binding alpha-12 (GNA12) and alpha-13 (GNA13). Acts as guanine nucleotide exchange factor (GEF) for RhoA GTPase and may act as GTPase-activating protein (GAP) for GNA12 and GNA13. This chain is Rho guanine nucleotide exchange factor 12 (ARHGEF12), found in Homo sapiens (Human).